The primary structure comprises 56 residues: Large ribosomal subunit protein bL32 (56 aa).

The disordered stretch occupies residues 1–36 (MAVQQNKKSRSKRGMRRSHDALSTAQLSVDATSGEV). Residues 7-16 (KKSRSKRGMR) show a composition bias toward basic residues. The span at 21-31 (ALSTAQLSVDA) shows a compositional bias: polar residues.

This sequence belongs to the bacterial ribosomal protein bL32 family.

This Shewanella oneidensis (strain ATCC 700550 / JCM 31522 / CIP 106686 / LMG 19005 / NCIMB 14063 / MR-1) protein is Large ribosomal subunit protein bL32.